The sequence spans 388 residues: Succinate--CoA ligase [ADP-forming] subunit beta (388 aa).

Residues lysine 46, 53 to 55 (GRG), glutamate 99, cysteine 102, and glutamate 107 contribute to the ATP site. Mg(2+)-binding residues include asparagine 199 and aspartate 213. Substrate contacts are provided by residues asparagine 264 and 321 to 323 (GIV).

The protein belongs to the succinate/malate CoA ligase beta subunit family. As to quaternary structure, heterotetramer of two alpha and two beta subunits. Mg(2+) serves as cofactor.

It carries out the reaction succinate + ATP + CoA = succinyl-CoA + ADP + phosphate. It catalyses the reaction GTP + succinate + CoA = succinyl-CoA + GDP + phosphate. It functions in the pathway carbohydrate metabolism; tricarboxylic acid cycle; succinate from succinyl-CoA (ligase route): step 1/1. Succinyl-CoA synthetase functions in the citric acid cycle (TCA), coupling the hydrolysis of succinyl-CoA to the synthesis of either ATP or GTP and thus represents the only step of substrate-level phosphorylation in the TCA. The beta subunit provides nucleotide specificity of the enzyme and binds the substrate succinate, while the binding sites for coenzyme A and phosphate are found in the alpha subunit. The polypeptide is Succinate--CoA ligase [ADP-forming] subunit beta (Actinobacillus pleuropneumoniae serotype 3 (strain JL03)).